A 449-amino-acid polypeptide reads, in one-letter code: Phosphoglucosamine mutase (449 aa).

The active-site Phosphoserine intermediate is serine 101. The Mg(2+) site is built by serine 101, aspartate 242, aspartate 244, and aspartate 246. The residue at position 101 (serine 101) is a Phosphoserine.

This sequence belongs to the phosphohexose mutase family. Mg(2+) serves as cofactor. Activated by phosphorylation.

The catalysed reaction is alpha-D-glucosamine 1-phosphate = D-glucosamine 6-phosphate. In terms of biological role, catalyzes the conversion of glucosamine-6-phosphate to glucosamine-1-phosphate. This is Phosphoglucosamine mutase from Methylocella silvestris (strain DSM 15510 / CIP 108128 / LMG 27833 / NCIMB 13906 / BL2).